The sequence spans 199 residues: Chaperone protein TorD (199 aa).

This sequence belongs to the TorD/DmsD family. TorD subfamily.

Its subcellular location is the cytoplasm. Involved in the biogenesis of TorA. Acts on TorA before the insertion of the molybdenum cofactor and, as a result, probably favors a conformation of the apoenzyme that is competent for acquiring the cofactor. This is Chaperone protein TorD from Escherichia coli O127:H6 (strain E2348/69 / EPEC).